Here is a 919-residue protein sequence, read N- to C-terminus: Probable dipeptidyl-aminopeptidase B (919 aa).

Positions 1 to 89 (MGANSRVNDD…DGYVPSGGKP (89 aa)) are disordered. At 1 to 95 (MGANSRVNDD…GGKPAQRRTR (95 aa)) the chain is on the cytoplasmic side. The span at 27–38 (DSSSTASISLTL) shows a compositional bias: low complexity. Residues 44 to 55 (HTATEPSKSTNG) are compositionally biased toward polar residues. Residues 96–116 (IVFWLLVALCVGGWAMAFIIM) traverse the membrane as a helical; Signal-anchor for type II membrane protein segment. The Vacuolar portion of the chain corresponds to 117–919 (ATSPNNRHST…RVIRRLLHFG (803 aa)). A disordered region spans residues 121–150 (NNRHSTSDSSSGGSESEIVKPNTPHDGKKI). Positions 127–136 (SDSSSGGSES) are enriched in low complexity. N207, N303, N355, N577, and N665 each carry an N-linked (GlcNAc...) asparagine glycan. S760 serves as the catalytic Charge relay system. N-linked (GlcNAc...) asparagine glycans are attached at residues N814 and N819. Catalysis depends on charge relay system residues D837 and H870.

The protein belongs to the peptidase S9B family.

The protein resides in the vacuole membrane. It carries out the reaction Release of an N-terminal dipeptide, Xaa-Yaa-|-Zaa-, from a polypeptide, preferentially when Yaa is Pro, provided Zaa is neither Pro nor hydroxyproline.. Functionally, type IV dipeptidyl-peptidase which removes N-terminal dipeptides sequentially from polypeptides having unsubstituted N-termini provided that the penultimate residue is proline. This Arthroderma otae (strain ATCC MYA-4605 / CBS 113480) (Microsporum canis) protein is Probable dipeptidyl-aminopeptidase B (DAPB).